Reading from the N-terminus, the 21-residue chain is Bibrotoxin (21 aa).

Intrachain disulfides connect cysteine 1-cysteine 15 and cysteine 3-cysteine 11.

The protein belongs to the endothelin/sarafotoxin family. In terms of tissue distribution, expressed by the venom gland.

It localises to the secreted. Vasoconstrictor activity. These toxins cause cardiac arrest probably as a result of coronary vasospasm. May act by displaying agonistic activities towards endothelin-1 and -2 receptors (EDNRA and EDNRB). The chain is Bibrotoxin from Atractaspis bibronii (Bibron's mole viper).